The primary structure comprises 346 residues: fMet-Leu-Phe receptor (346 aa).

Residues Asn1 and Asn7 are each glycosylated (N-linked (GlcNAc...) asparagine). The Extracellular segment spans residues 1-24 (NSSLPTNISGGTPAVSAGYLFLDI). A helical membrane pass occupies residues 25–47 (ITYLVYAVTFVLGVLGNGLVIWV). The Cytoplasmic segment spans residues 48 to 58 (AGFRMTHTVTT). Residues 59-80 (ISYLNLAVADFCFTSTLPFFMV) form a helical membrane-spanning segment. The Extracellular segment spans residues 81 to 97 (RKAMGGHWPFGWFLCKF). A disulfide bond links Cys95 and Cys173. Residues 98–118 (IFTIVDINLFGSVFLIALIAL) traverse the membrane as a helical segment. Over 119–137 (DRCVCVLHPVWTQNHRTVS) the chain is Cytoplasmic. Residues 138–159 (LAKKVIIGPWVMALLLTLPVII) traverse the membrane as a helical segment. Residues 160 to 202 (RVTTVPGKMGTVSCTFNFSPWTNDPKERIKVAIAMLTVRGIIR) are Extracellular-facing. A helical membrane pass occupies residues 203 to 223 (FIIGFSAPMSIVAVSYGLIAT). Over 224 to 239 (KIHKQGLIKSSRPLRV) the chain is Cytoplasmic. The helical transmembrane segment at 240–263 (LSFVAAAFFLCWSPYQVVAFIATV) threads the bilayer. Residues 264–282 (RIRELLQGMYKEISIAVDV) lie on the Extracellular side of the membrane. The helical transmembrane segment at 283 to 302 (TSALAFFNSCLNPMLYVFMG) threads the bilayer. Residues 303-346 (QDFRERLIHSLPASLERALTEASTQTSDTATNSTLPSAEVALQA) lie on the Cytoplasmic side of the membrane. Polar residues predominate over residues 324–338 (ASTQTSDTATNSTLP). The interval 324-346 (ASTQTSDTATNSTLPSAEVALQA) is disordered.

It belongs to the G-protein coupled receptor 1 family. In terms of processing, phosphorylated; which is necessary for desensitization.

The protein localises to the cell membrane. High affinity receptor for N-formyl-methionyl peptides (fMLP), which are powerful neutrophil chemotactic factors. Binding of fMLP to the receptor stimulates intracellular calcium mobilization and superoxide anion release. This response is mediated via a G-protein that activates a phosphatidylinositol-calcium second messenger system. Receptor for TAFA4, mediates its effects on chemoattracting macrophages, promoting phagocytosis and increasing ROS release. Receptor for cathepsin CTSG, leading to increased phagocyte chemotaxis. The protein is fMet-Leu-Phe receptor (FPR1) of Pongo pygmaeus (Bornean orangutan).